The primary structure comprises 1359 residues: Regulatory-associated protein of TOR 2 (1359 aa).

2 disordered regions span residues 17–64 (SSAA…PQVA) and 782–819 (SDNS…QHSD). The span at 32–50 (HLVDDHLPVENGPDPRRDV) shows a compositional bias: basic and acidic residues. The segment covering 782–805 (SDNSATARDGRISTSSPIATNSIM) has biased composition (polar residues). A compositionally biased stretch (low complexity) spans 806–819 (HGSPQSDDSSQHSD). 7 WD repeats span residues 1041–1080 (RFEL…PVNT), 1087–1127 (SDRG…GGQK), 1139–1178 (RSAG…VNTI), 1181–1221 (TADS…RLVY), 1228–1269 (PRSE…EPYL), 1273–1312 (AHRG…LTII), and 1321–1359 (QRIG…YQVR).

The protein belongs to the WD repeat RAPTOR family. In terms of assembly, the target of rapamycin complex 1 (TORC1) is composed of at least RAPTOR, LST8 and TOR.

Functionally, component of TORC1 complex, which is an essential cell growth regulator that controls plant development. Acts by recruiting substrates for TOR. Acts by activating transcription, protein synthesis and ribosome biogenesis, and inhibiting mRNA degradation and autophagy. In Oryza sativa subsp. japonica (Rice), this protein is Regulatory-associated protein of TOR 2 (RAPTOR2).